Consider the following 208-residue polypeptide: 3-demethoxyubiquinol 3-hydroxylase (208 aa).

Residues Glu57, Glu87, His90, Glu139, Glu171, and His174 each contribute to the Fe cation site.

This sequence belongs to the COQ7 family. It depends on Fe cation as a cofactor.

The protein resides in the cell membrane. It catalyses the reaction a 5-methoxy-2-methyl-3-(all-trans-polyprenyl)benzene-1,4-diol + AH2 + O2 = a 3-demethylubiquinol + A + H2O. The protein operates within cofactor biosynthesis; ubiquinone biosynthesis. Functionally, catalyzes the hydroxylation of 2-nonaprenyl-3-methyl-6-methoxy-1,4-benzoquinol during ubiquinone biosynthesis. The polypeptide is 3-demethoxyubiquinol 3-hydroxylase (Burkholderia pseudomallei (strain 1106a)).